A 490-amino-acid chain; its full sequence is Ribulose bisphosphate carboxylase large chain (490 aa).

Asn127 and Thr177 together coordinate substrate. The active-site Proton acceptor is Lys179. Lys181 contributes to the substrate binding site. Residues Lys205, Asp207, and Glu208 each coordinate Mg(2+). Lys205 is modified (N6-carboxylysine). The active-site Proton acceptor is His297. Substrate-binding residues include Arg298, His330, and Ser382.

Belongs to the RuBisCO large chain family. Type I subfamily. In terms of assembly, heterohexadecamer of 8 large chains and 8 small chains. Requires Mg(2+) as cofactor.

The protein resides in the plastid. Its subcellular location is the chloroplast. It catalyses the reaction 2 (2R)-3-phosphoglycerate + 2 H(+) = D-ribulose 1,5-bisphosphate + CO2 + H2O. The catalysed reaction is D-ribulose 1,5-bisphosphate + O2 = 2-phosphoglycolate + (2R)-3-phosphoglycerate + 2 H(+). In terms of biological role, ruBisCO catalyzes two reactions: the carboxylation of D-ribulose 1,5-bisphosphate, the primary event in carbon dioxide fixation, as well as the oxidative fragmentation of the pentose substrate in the photorespiration process. Both reactions occur simultaneously and in competition at the same active site. The chain is Ribulose bisphosphate carboxylase large chain from Cylindrotheca sp. (strain N1) (Marine diatom).